A 252-amino-acid polypeptide reads, in one-letter code: Trans-aconitate 2-methyltransferase (252 aa).

It belongs to the methyltransferase superfamily. Tam family.

Its subcellular location is the cytoplasm. It catalyses the reaction trans-aconitate + S-adenosyl-L-methionine = (E)-3-(methoxycarbonyl)pent-2-enedioate + S-adenosyl-L-homocysteine. In terms of biological role, catalyzes the S-adenosylmethionine monomethyl esterification of trans-aconitate. In Shigella flexneri, this protein is Trans-aconitate 2-methyltransferase.